A 38-amino-acid polypeptide reads, in one-letter code: Photosystem I reaction center subunit VIII (38 aa).

A helical membrane pass occupies residues 12–32; the sequence is WILIPIIGWLMPAVVMGLLFL.

This sequence belongs to the PsaI family.

It is found in the cellular thylakoid membrane. May help in the organization of the PsaL subunit. The sequence is that of Photosystem I reaction center subunit VIII from Gloeothece citriformis (strain PCC 7424) (Cyanothece sp. (strain PCC 7424)).